The primary structure comprises 572 residues: Proline--tRNA ligase (572 aa).

It belongs to the class-II aminoacyl-tRNA synthetase family. ProS type 1 subfamily. In terms of assembly, homodimer.

The protein resides in the cytoplasm. It catalyses the reaction tRNA(Pro) + L-proline + ATP = L-prolyl-tRNA(Pro) + AMP + diphosphate. Catalyzes the attachment of proline to tRNA(Pro) in a two-step reaction: proline is first activated by ATP to form Pro-AMP and then transferred to the acceptor end of tRNA(Pro). As ProRS can inadvertently accommodate and process non-cognate amino acids such as alanine and cysteine, to avoid such errors it has two additional distinct editing activities against alanine. One activity is designated as 'pretransfer' editing and involves the tRNA(Pro)-independent hydrolysis of activated Ala-AMP. The other activity is designated 'posttransfer' editing and involves deacylation of mischarged Ala-tRNA(Pro). The misacylated Cys-tRNA(Pro) is not edited by ProRS. The sequence is that of Proline--tRNA ligase from Haemophilus influenzae (strain PittGG).